Consider the following 95-residue polypeptide: Co-chaperonin GroES (95 aa).

It belongs to the GroES chaperonin family. As to quaternary structure, heptamer of 7 subunits arranged in a ring. Interacts with the chaperonin GroEL.

The protein resides in the cytoplasm. Functionally, together with the chaperonin GroEL, plays an essential role in assisting protein folding. The GroEL-GroES system forms a nano-cage that allows encapsulation of the non-native substrate proteins and provides a physical environment optimized to promote and accelerate protein folding. GroES binds to the apical surface of the GroEL ring, thereby capping the opening of the GroEL channel. This is Co-chaperonin GroES from Cereibacter sphaeroides (strain ATCC 17025 / ATH 2.4.3) (Rhodobacter sphaeroides).